Here is a 443-residue protein sequence, read N- to C-terminus: Serine--tRNA ligase (443 aa).

246–248 (TAE) lines the L-serine pocket. Position 277 to 279 (277 to 279 (RAE)) interacts with ATP. Glu-300 contacts L-serine. 367–370 (EISS) serves as a coordination point for ATP. Position 402 (Ser-402) interacts with L-serine.

It belongs to the class-II aminoacyl-tRNA synthetase family. Type-1 seryl-tRNA synthetase subfamily. In terms of assembly, homodimer. The tRNA molecule binds across the dimer.

It localises to the cytoplasm. The enzyme catalyses tRNA(Ser) + L-serine + ATP = L-seryl-tRNA(Ser) + AMP + diphosphate + H(+). The catalysed reaction is tRNA(Sec) + L-serine + ATP = L-seryl-tRNA(Sec) + AMP + diphosphate + H(+). Its pathway is aminoacyl-tRNA biosynthesis; selenocysteinyl-tRNA(Sec) biosynthesis; L-seryl-tRNA(Sec) from L-serine and tRNA(Sec): step 1/1. Its function is as follows. Catalyzes the attachment of serine to tRNA(Ser). Is also able to aminoacylate tRNA(Sec) with serine, to form the misacylated tRNA L-seryl-tRNA(Sec), which will be further converted into selenocysteinyl-tRNA(Sec). In Bradyrhizobium diazoefficiens (strain JCM 10833 / BCRC 13528 / IAM 13628 / NBRC 14792 / USDA 110), this protein is Serine--tRNA ligase.